Here is an 891-residue protein sequence, read N- to C-terminus: Translation initiation factor IF-2 (891 aa).

The region spanning 390-559 (NRAPIVTIMG…LLQSDMLELK (170 aa)) is the tr-type G domain. The interval 399–406 (GHVDHGKT) is G1. A GTP-binding site is contributed by 399–406 (GHVDHGKT). Residues 424-428 (GITQS) are G2. The G3 stretch occupies residues 445–448 (DTPG). Residues 445–449 (DTPGH) and 499–502 (NKID) each bind GTP. Residues 499-502 (NKID) are G4. The G5 stretch occupies residues 535-537 (SAT).

Belongs to the TRAFAC class translation factor GTPase superfamily. Classic translation factor GTPase family. IF-2 subfamily.

It is found in the cytoplasm. Functionally, one of the essential components for the initiation of protein synthesis. Protects formylmethionyl-tRNA from spontaneous hydrolysis and promotes its binding to the 30S ribosomal subunits. Also involved in the hydrolysis of GTP during the formation of the 70S ribosomal complex. This chain is Translation initiation factor IF-2, found in Blochmanniella pennsylvanica (strain BPEN).